The primary structure comprises 364 residues: Heme A synthase (364 aa).

A run of 8 helical transmembrane segments spans residues 25-45 (ALRL…LVGG), 111-131 (FLAR…WATG), 139-159 (WPLV…WWMV), 174-194 (LATH…VMRG), 212-232 (AIAL…VAGL), 270-290 (VQFV…YHMV), 305-325 (SVVL…ALLL), and 327-347 (VPLD…GFTV). His274 lines the heme pocket. Residue His335 coordinates heme.

It belongs to the COX15/CtaA family. Type 2 subfamily. In terms of assembly, interacts with CtaB. Heme b is required as a cofactor.

It is found in the cell membrane. It carries out the reaction Fe(II)-heme o + 2 A + H2O = Fe(II)-heme a + 2 AH2. The protein operates within porphyrin-containing compound metabolism; heme A biosynthesis; heme A from heme O: step 1/1. Functionally, catalyzes the conversion of heme O to heme A by two successive hydroxylations of the methyl group at C8. The first hydroxylation forms heme I, the second hydroxylation results in an unstable dihydroxymethyl group, which spontaneously dehydrates, resulting in the formyl group of heme A. This Allorhizobium ampelinum (strain ATCC BAA-846 / DSM 112012 / S4) (Agrobacterium vitis (strain S4)) protein is Heme A synthase.